A 325-amino-acid chain; its full sequence is Tetraacyldisaccharide 4'-kinase (325 aa).

Position 55 to 62 (55 to 62) interacts with ATP; it reads TAGGNGKT.

This sequence belongs to the LpxK family.

It catalyses the reaction a lipid A disaccharide + ATP = a lipid IVA + ADP + H(+). Its pathway is glycolipid biosynthesis; lipid IV(A) biosynthesis; lipid IV(A) from (3R)-3-hydroxytetradecanoyl-[acyl-carrier-protein] and UDP-N-acetyl-alpha-D-glucosamine: step 6/6. Transfers the gamma-phosphate of ATP to the 4'-position of a tetraacyldisaccharide 1-phosphate intermediate (termed DS-1-P) to form tetraacyldisaccharide 1,4'-bis-phosphate (lipid IVA). This chain is Tetraacyldisaccharide 4'-kinase, found in Salmonella dublin (strain CT_02021853).